Reading from the N-terminus, the 773-residue chain is MRNPFLTFRAPTRKTGDYLVSKFVKKDNFSSLRLARAYTFSTRSTAVSQFSLLSLSQRSFQSLKINKGIPEKHKIPLISSKQFSVTSKRSQNGSSGSNSDANGRKNGQKNDDSKKKGLNGNDPKKVFEIALNGNTILGGILVAYILYNVLSPNANMQEITWQDFRQQFLDKGLVERLVVVNRNMVRVILRGGVASGSGQYYFSIGSIDSFDRKLEDAQRQLGIPPSEFVPVAYHDEVSVLATLLSFAPTLLIIGSVIYLSRRASGAAGGGQGGIFGIGKSRAKMFNHETDIKIKFADVAGVDEAKEEIMEFVKFLKNPKFYERLGAKIPRGAILSGPPGTGKTLLAKATAGEANVPFLSVSGSEFLEMFVGVGPSRVRDLFATARKNAPCIIFIDEIDAIGKARGRGGQFGSNDERESTLNQLLVEMDGFTSSEHIVVFAGTNRPDVLDPALLRPGRFDRQITIDRPDIGGREQIFKVHLKHIKAADNIDLIAKRLAVLTSGFTGADIMNVCNEGALIAARSNSNEVQMVHFEQAIERVTAGLEKKSRVLSPEEKNTVAHHEAGHAVAGWFMEYVDPLLKVSIIPRAQALGYASYLPKDQYLMSRGQILDQMGMALAGRVSEEIFFGPEKITSGASDDFQKVTRMAQAYVTQYGMSPTVGTIAYPIDTRETVQKPFSEATAQMIDEEIRKLVKHAYERTKKLLLEHKQGLENIAQRLLQKEVITYNEVETILGPRPYAYKHLNISELMRQSEYKNDHDPRNPPIPPSPQQPSA.

The disordered stretch occupies residues 83–119 (FSVTSKRSQNGSSGSNSDANGRKNGQKNDDSKKKGLN). A compositionally biased stretch (low complexity) spans 87–101 (SKRSQNGSSGSNSDA). Helical transmembrane passes span 126–146 (VFEIALNGNTILGGILVAYIL) and 239–259 (VLATLLSFAPTLLIIGSVIYL). 8 residues coordinate ATP: V298, A299, T340, G341, K342, T343, L344, and H479. Residue H561 participates in Zn(2+) binding. Residue E562 is part of the active site. H565 and D638 together coordinate Zn(2+). Residues 752 to 773 (EYKNDHDPRNPPIPPSPQQPSA) form a disordered region. Pro residues predominate over residues 761–773 (NPPIPPSPQQPSA).

In the N-terminal section; belongs to the AAA ATPase family. It in the C-terminal section; belongs to the peptidase M41 family. As to quaternary structure, component of the m-AAA protease complex. It depends on Zn(2+) as a cofactor.

The protein resides in the mitochondrion membrane. The enzyme catalyses ATP + H2O = ADP + phosphate + H(+). Catalytic component of the m-AAA protease, a protease that plays a key role in proteostasis of inner mitochondrial membrane proteins. Possesses both ATPase and protease activities: the ATPase activity is required to unfold substrates, threading them into the internal proteolytic cavity for hydrolysis into small peptide fragments. The complex is necessary for the assembly of mitochondrial respiratory chain and ATPase complexes. The m-AAA protease carries out protein quality control in the inner membrane of the mitochondria by mediating degradation of mistranslated or misfolded polypeptides. It also mediates protein maturation of the mitochondrial ribosomal subunit mrpl32/bL32m by catalyzing the cleavage of the presequence of mrpl32/bL32m prior to assembly into the mitochondrial ribosome. Also acts as a membrane protein dislocase: required to dislocate moderately hydrophobic transmembrane segments from the membrane. This is Mitochondrial inner membrane m-AAA protease component yta12 (yta12) from Schizosaccharomyces pombe (strain 972 / ATCC 24843) (Fission yeast).